The following is a 415-amino-acid chain: F-box protein ETP1 (415 aa).

The F-box domain occupies 1–46; that stretch reads MTIPDLCNDLVDEILCRVPARNLKRLRSTSKRWNRLFKDDRRFARE.

Interacts with EIN2 (via C-terminus).

Negative regulator of EIN2 protein stability. The chain is F-box protein ETP1 from Arabidopsis thaliana (Mouse-ear cress).